Consider the following 405-residue polypeptide: Diaminopimelate decarboxylase (405 aa).

Lys-46 carries the post-translational modification N6-(pyridoxal phosphate)lysine. Residues Gly-225 and 259–262 (EPGR) each bind pyridoxal 5'-phosphate. Substrate is bound by residues Arg-262, Arg-298, and Tyr-302. Cys-329 serves as the catalytic Proton donor. Positions 330 and 358 each coordinate substrate. Tyr-358 is a binding site for pyridoxal 5'-phosphate.

It belongs to the Orn/Lys/Arg decarboxylase class-II family. LysA subfamily. As to quaternary structure, homodimer. Pyridoxal 5'-phosphate serves as cofactor.

It catalyses the reaction meso-2,6-diaminopimelate + H(+) = L-lysine + CO2. It participates in amino-acid biosynthesis; L-lysine biosynthesis via DAP pathway; L-lysine from DL-2,6-diaminopimelate: step 1/1. In terms of biological role, specifically catalyzes the decarboxylation of meso-diaminopimelate (meso-DAP) to L-lysine. The chain is Diaminopimelate decarboxylase from Helicobacter pylori (strain ATCC 700392 / 26695) (Campylobacter pylori).